We begin with the raw amino-acid sequence, 309 residues long: Protoheme IX farnesyltransferase (309 aa).

9 consecutive transmembrane segments (helical) span residues 35–55 (IGIVNSNLITTFAGMWLAFYF), 64–84 (LHLVFFTLFGAALVIAGSCAI), 114–134 (VLWLGIGLVAIGEMGLLMTTV), 135–155 (TAAVVGLIGMATYVFLYTLWT), 161–181 (INTVVGSISGAVPPVIGWTAV), 187–207 (IVPLILFLIMFLWQPPHFLAL), 231–251 (MTKRQIIVWVACLLPLPFYLF), 253–273 (LGVPFLIVATLLNVGWLLLGL), and 289–309 (FVYSLNYLTILFVAMIIATLW).

It belongs to the UbiA prenyltransferase family. Protoheme IX farnesyltransferase subfamily. As to quaternary structure, interacts with CtaA.

The protein resides in the cell membrane. The catalysed reaction is heme b + (2E,6E)-farnesyl diphosphate + H2O = Fe(II)-heme o + diphosphate. It functions in the pathway porphyrin-containing compound metabolism; heme O biosynthesis; heme O from protoheme: step 1/1. In terms of biological role, converts heme B (protoheme IX) to heme O by substitution of the vinyl group on carbon 2 of heme B porphyrin ring with a hydroxyethyl farnesyl side group. The sequence is that of Protoheme IX farnesyltransferase from Geobacillus kaustophilus (strain HTA426).